The following is a 220-amino-acid chain: MAYRDQPLGELALSIPRASALFRQYDMDYCCGGKQTLARAATRHDVDIDIIEAQLAQLAEQPIEKDWRAVPLADIIDHIVVRYHDRHREQLPELILQATKVERVHADKPNVPRGLTKYLTALHEELSSHMMKEEQILFPMIKQGMGRQATGPISVMESEHDEAGELVDVIKHVTQNVTPPPEACTTWKAMYNGINEMIDDLMEHISLENNVLFPRALAGE.

This sequence belongs to the RIC family. YtfE subfamily. Homodimer.

It is found in the cytoplasm. Di-iron-containing protein involved in the repair of iron-sulfur clusters damaged by oxidative and nitrosative stress conditions. This is Iron-sulfur cluster repair protein YtfE from Salmonella choleraesuis (strain SC-B67).